The following is a 628-amino-acid chain: Protein ETHYLENE INSENSITIVE 3 (628 aa).

The stretch at 38 to 68 (EDDYTDDEIDVDELERRMWRDKMRLKRLKEQ) forms a coiled coil. Positions 66–79 (KEQDKGKEGVDAAK) are enriched in basic and acidic residues. A disordered region spans residues 66 to 92 (KEQDKGKEGVDAAKQRQSQEQARRKKM). The segment at 174-306 (TPHTLQELQD…SLARELYPES (133 aa)) is DNA-binding domain.

It belongs to the EIN3 family. In terms of assembly, acts as a homodimer to bind the primary ethylene response element. Interacts with TAF12B. Interacts with KIN10. Binds to ENAP1 in the presence of ethylene; this reaction facilitates its association with histone. Phosphorylated by KIN10.

The protein localises to the nucleus. With respect to regulation, activated by phosphorylation by MPK3 and MPK6. Down-regulated by KIN10 that controls its protein stability under a phosphorylation-dependent manner. Satnilitzed during hypoxia (e.g. submergences) via a ceramides-triggered and CTR1-dependent manner. Functionally, transcription factor acting as a positive regulator in the ethylene response pathway, by promoting histone acetylation in an ENAP1-dependent manner, thus accelerating the expression of ethylene-responsive genes. Binds DNA. Is required for ethylene responsiveness in adult plant tissues. Binds a primary ethylene response element present in the ETHYLENE-RESPONSE-FACTOR1 promoter with consequence to activate the transcription of this gene. The protein is Protein ETHYLENE INSENSITIVE 3 of Arabidopsis thaliana (Mouse-ear cress).